A 265-amino-acid polypeptide reads, in one-letter code: tRNA (guanine-N(7)-)-methyltransferase (265 aa).

S-adenosyl-L-methionine-binding residues include E96, E121, D148, and D170. The active site involves D170. Substrate-binding residues include K174 and D206.

This sequence belongs to the class I-like SAM-binding methyltransferase superfamily. TrmB family.

It carries out the reaction guanosine(46) in tRNA + S-adenosyl-L-methionine = N(7)-methylguanosine(46) in tRNA + S-adenosyl-L-homocysteine. It participates in tRNA modification; N(7)-methylguanine-tRNA biosynthesis. Catalyzes the formation of N(7)-methylguanine at position 46 (m7G46) in tRNA. The chain is tRNA (guanine-N(7)-)-methyltransferase from Rhodopseudomonas palustris (strain ATCC BAA-98 / CGA009).